A 331-amino-acid chain; its full sequence is N-arachidonyl glycine receptor (331 aa).

Topologically, residues 1–26 (MITLNNQDQPVPFNNSYPDEYEIAAL) are extracellular. N-linked (GlcNAc...) asparagine glycosylation occurs at Asn14. Residues 27-47 (VFYSCIFIIGLFVNITALWVF) traverse the membrane as a helical segment. The Cytoplasmic segment spans residues 48–56 (SCTTKKRTT). Residues 57–77 (VTIYMMNVALVDLIFIMTLPF) form a helical membrane-spanning segment. Residues 78 to 95 (RMFYYAKDEWPFGEYFCQ) lie on the Extracellular side of the membrane. Cysteines 94 and 172 form a disulfide. Residues 96 to 116 (ILGALTVFYPSIALWLLAFIS) traverse the membrane as a helical segment. Topologically, residues 117–138 (ADRYMAIVQPKYAKELKNTCKA) are cytoplasmic. Residues 139–159 (VLACVGVWIMTLTTTIPLLLL) traverse the membrane as a helical segment. The Extracellular portion of the chain corresponds to 160-191 (HKDPDKDSTPATCLKISDIVYLKAVNVLNFTR). An N-linked (GlcNAc...) asparagine glycan is attached at Asn188. A helical membrane pass occupies residues 192–212 (LTFFFLIPLFIMIGCYLVIIH). Residues 213–232 (NLLHGRTSKLKPKVKEKSIR) are Cytoplasmic-facing. Residues 233–253 (IIITLLVQVLVCFMPFHICFA) traverse the membrane as a helical segment. Residues 254-268 (FLMLGTGENSYSPWG) lie on the Extracellular side of the membrane. Residues 269 to 289 (AFTTFLMNLSTCLDVILYYIV) form a helical membrane-spanning segment. Over 290–331 (SKQFQARVISVMLYRNYLRGMRRKSFRSGSLRSLSNINSEML) the chain is Cytoplasmic. At Ser322 the chain carries Phosphoserine.

Belongs to the G-protein coupled receptor 1 family.

The protein localises to the cell membrane. It is found in the cytoplasmic vesicle membrane. Its function is as follows. G protein-coupled receptor (GPCR) that plays a role in diverse physiological processes particularly within the immune and nervous systems. Becomes active when triggered by various endogenous ligands including endocannabinoid N-arachidonyl glycine (NAGly), delta-9-tetrahydrocannabinol or resolvin D2/RvD2 derived from the omega-3 fatty acid docosahexaenoic acid (DHA). Upon RvD2 binding, facilitates the resolution of inflammation, aiding in tissue repair and homeostasis. Mechanistically, RvD2 ligation initiates Galphas protein coupling, activation of cAMP-PKA signaling pathway and phosphorylation of STAT3, leading to RvD2-stimulated macrophage phagocytosis. Mediates NAGly-induced process of reorganization of actin filaments and induction of acrosomal exocytosis. Activation by N-arachidonoyl glycine (NAGly) can also induce apoptosis in macrophages. Plays a role in homeostasis of CD8+ subsets of intraepithelial lymphocytes (IELs) (CD8alphaalpha and CD8alphabeta IELs) in small intestine by supporting preferential migration of CD8alphaalpha T-cells to intraepithelial compartment over lamina propria compartment, and by mediating their reconstitution into small intestine after bone marrow transplant. Participates also in hypotensive responses, mediating reduction in intraocular and blood pressure. The sequence is that of N-arachidonyl glycine receptor from Macaca fascicularis (Crab-eating macaque).